Consider the following 2798-residue polypeptide: MNGDMPHVPITTLAGIASLTDLLNQLPLPSPLPATTTKSLLFNSRIAEEVNCLLACRDDNLVSQLVHSLNQVSTDHIELKDNLGSDDPEGDIPVLLQAVLARSPNVFREKSMQNRYVQSGMMMSQYKLSQNSMHSSPASSNYQQTTISHSPSSRFVPPQTSSGNRFMPQQNSPVPSPYAPQSPAGYMPYSHPSSYTTHPQMQQASVSSPIVAGGLRNIHDNKVSGPLSGNSANHHADNPRHGSSDDYLHMVHRLSSDDGDSSTMRNAASFPLRSPQPVCSPAGSDGTPKGSRPPLILQSQSLPCSSPRDVPPDILLDSPERKQKKQKKIKLGKDEKDQNEKAAMYDIISSPTKDSTKLTLRLSRVRSSDMDQQDDMLSGMENSNVSENDIPFNVQYPGQTSKTPITPQDVNRPLNAAQCLSQQEQTAFLPANQVPVLQQNTSVATKQPQTSVVQNQQQVSQQGPIYDEVELDALAEIERIERESAIERERFSKEVQDKDKPLKKRKQDSYPQEAGGATGGNRPASQETGSTGNGSRPALMVSIDLHQAGRVDSQASITQDSDSIKKPEETKQCNDAPISVLQEDIVGSLKSIPENHPETPKKKSDPELSKSEMKQNESRLSESKPNENQLGESKSNESKLETKTETPTEELKQNENKTTESKQSESAVVEPKQNENRPCDTKPNDNKQNNTRSENTKARPETPKQKAESRPETPKQKSEGRPETPKQKGDGRPETPKQKSEGRPETPKQKGEGRPETPKHRHENRRDSGKPSTEKKPDVSKHKQDIKSDSPRLKSERAEALKQRPDGRWESLRRDHDSKQKSDDRGESERHRGDQSRVRRPETLRSSSRNDHSTKSDGSKTEKLERKHRHESGDSRDRPSGEQKSRPDSPRVKQGDTNKSRPGFKSPNSKDDKRTEGNRSKVDSNKAHTDNKAEFPSYLLGGRSGALKNFVIPKIKRDKDGNITQETKKMDMKGEQKDKVEKMGLVEDLNKGAKPVVVLQKLSLDDVQKLIKDREEKSRSSLKSIKNKPSKSNKGSIDQSVLKELPPELLAEIESTMPLCERVKMNKRKRSTVNEKPKYAEISSDEDNDSDEAFESSRKRHKKDDDKAWEYEERDRRSSGDHRRSGHSHDGRRSSGGGRYRNRSPSDSDMEDYSPPPSLSEVARKMKKKEKQKKRKAYEPKLTPEEMMDSSTFKRFTASIENILDNLEDMDFTAFGDDDEIPQELLLGKHQLNELGSESAKIKAMGIMDKLSTDKTVKVLNILEKNIQDGSKLSTLLNHNNDTEEEERLWRDLIMERVTKSADACLTTINIMTSPNMPKAVYIEDVIERVIQYTKFHLQNTLYPQYDPVYRVDPHGGGLLSSKAKRAKCSTHKQRVIVMLYNKVCDIVSSLSELLEIQLLTDTTILQVSSMGITPFFVENVSELQLCAIKLVTAVFSRYEKHRQLILEEIFTSLARLPTSKRSLRNFRLNSSDVDGEPMYIQMVTALVLQLIQCVVHLPSSEKDPNSEEDSNKKVDQDVVITNSYETAMRTAQNFLSIFLKKCGSKQGEEDYRPLFENFVQDLLSTVNKPEWPAAELLLSLLGRLLVHQFSNKSTEMALRVASLDYLGTVAARLRKDAVTSKMDQGSIERILKQVSGGEDEIQQLQKALLDYLDENTETDPSLVFSRKFYIAQWFRDTTLETEKAMKSQKDEESSDATHHAKELETTGQIMHRAENRKKFLRSIIKTTPSQFSTLKMNSDTVDYDDACLIVRYLASMRPFAQSFDIYLTQILRVLGENAIAVRTKAMKCLSEVVAVDPSILARLDMQRGVHGRLMDNSTSVREAAVELLGRFVLCRPQLAEQYYDMLIERILDTGISVRKRVIKILRDICIEQPTFPKITEMCVKMIRRVNDEEGIKKLVNETFQKLWFTPTPHNDKEAMTRKILNITDVVAACRDTGYDWFEQLLQNLLKSEEDSSYKPVKKACTQLVDNLVEHILKYEESLADSDNKGVNSGRLVACITTLFLFSKIRPQLMVKHAMTMQPYLTTKCSTQNDFMVICNVAKILELVVPLMEHPSETFLATIEEDLMKLIIKYGMTVVQHCVSCLGAVVNKVTQNFKFVWACFNRYYGAISKLKSQHQEDPNNTSLLTNKPALLRSLFTVGALCRHFDFDLEDFKGNSKVNIKDKVLELLMYFTKHSDEEVQTKAIIGLGFAFIQHPSLMFEQEVKNLYNSILSDKNSSVNLKIQVLKNLQTYLQEEDTRMQQADRDWKKVAKQEDLKEMGDVSSGMSSSIMQLYLKQVLEAFFHTQSSVRHFALNVIALTLNQGLIHPVQCVPYLIAMGTDPEPAMRNKADQQLVEIDKKYAGFIHMKAVAGMKMSYQVQQAINTCLKDPVRGFRQDESSSALCSHLYSMIRGNRQHRRAFLISLLNLFDDTAKTEVTMLLYIADNLACFPYQTQEEPLFIMHHIDITLSVSGSNLLQSFKESMVKDKRKERKTSPAKENESSESEEEVSRPRKSRKRVDSESDSDSEDDINSVMKCLPENSAPLIEFANVSQGILLLLMLKQHLKNLCGFSDSKIQKYSPSESAKVYDKAINRKTGVHFHPKQTLDFLRSDMANSKLTEDVKRSIVRQYLDFKLLMEHLDPDEEEEEGEVSASTNARNKAITSLLGGGSPKNNTAADTEDEESDGEDRGGGTSGSLRRSKRNSDSTELAAQMNESVDVMDVIAICCPKYKDRPQIARVVQRTSSGVSVQWMAGSYSGSWTEAKRRDGRKLVPWVDTIKESDIIYKKIALTSANKLTNKVVQTLRSLYAAKDGTSS.

2 stretches are compositionally biased toward polar residues: residues Leu128–Pro173 and His191–Ser208. The interval Leu128–Gln338 is disordered. Ser150 and Ser162 each carry phosphoserine. A compositionally biased stretch (basic and acidic residues) spans His234 to His249. Phosphoserine occurs at positions 243, 256, 274, 280, 284, 301, 306, 318, and 350. Over residues Arg482 to Lys500 the composition is skewed to basic and acidic residues. Residues Arg482–Leu940 form a disordered region. Polar residues predominate over residues Pro523–Gly534. Composition is skewed to basic and acidic residues over residues Asp562–Gln572, Pro593–Pro625, Lys634–Gln663, Lys672–Asp685, and Glu694–Lys899. A phosphothreonine mark is found at Thr713 and Thr746. Ser906 is subject to Phosphoserine. Residues Asn908–Ala933 are compositionally biased toward basic and acidic residues. The short motif at Asn990–Ser1003 is the PxVxL motif element. 2 disordered regions span residues Ile1011–Val1041 and Glu1054–Glu1186. Residue Lys1076 is modified to N6-acetyllysine. Ser1083, Ser1084, and Ser1090 each carry phosphoserine. The segment covering Ser1083 to Phe1094 has biased composition (acidic residues). A compositionally biased stretch (basic and acidic residues) spans Lys1103–Arg1133. A phosphoserine mark is found at Ser1144, Ser1146, and Ser1148. Tyr1153 is subject to Phosphotyrosine. Ser1154 carries the post-translational modification Phosphoserine. Over residues Lys1165–Lys1176 the composition is skewed to basic residues. Residue Thr1183 is modified to Phosphothreonine. Phosphoserine is present on Ser1191. A compositionally biased stretch (basic and acidic residues) spans Ala1685–Glu1705. A disordered region spans residues Ala1685–Thr1706. 5 HEAT repeats span residues Ala1761–Ser1799, Pro1837–Thr1875, Tyr1939–Lys1978, Val2221–Met2261, and Leu2307–Gly2345. Basic and acidic residues predominate over residues Val2467–Glu2483. Disordered regions lie at residues Val2467–Asn2514 and Thr2645–Glu2690. Phosphoserine occurs at positions 2487, 2503, 2505, 2507, 2509, 2646, and 2652. The span at Glu2504 to Ile2513 shows a compositional bias: acidic residues. The residue at position 2661 (Thr2661) is a Phosphothreonine. Position 2666 is a phosphoserine (Ser2666).

This sequence belongs to the SCC2/Nipped-B family. In terms of assembly, heterodimerizes with MAU2/SCC4 to form the cohesin loading complex. The NIPBL-MAU2 heterodimer interacts with the cohesin complex composed of SMC1A/B and SMC3 heterodimer, RAD21 and STAG1/SA1. NIPBL directly contacts all members of the complex, RAD21, SMC1A/B, SMC3 and STAG1. Interacts directly (via PxVxL motif) with CBX3 and CBX5. Interacts with ZNF609 (via N-terminus). Interacts with the multiprotein complex Integrator. Interacts with BRD4. Spermatocytes and oocytes (at protein level).

Its subcellular location is the nucleus. The protein localises to the chromosome. Functionally, plays an important role in the loading of the cohesin complex on to DNA. Forms a heterodimeric complex (also known as cohesin loading complex) with MAU2/SCC4 which mediates the loading of the cohesin complex onto chromatin. Plays a role in cohesin loading at sites of DNA damage. Its recruitment to double-strand breaks (DSBs) sites occurs in a CBX3-, RNF8- and RNF168-dependent manner whereas its recruitment to UV irradiation-induced DNA damage sites occurs in a ATM-, ATR-, RNF8- and RNF168-dependent manner. Along with ZNF609, promotes cortical neuron migration during brain development by regulating the transcription of crucial genes in this process. Preferentially binds promoters containing paused RNA polymerase II. Up-regulates the expression of SEMA3A, NRP1, PLXND1 and GABBR2 genes, among others. This chain is Nipped-B-like protein (Nipbl), found in Mus musculus (Mouse).